The primary structure comprises 158 residues: SsrA-binding protein (158 aa).

Residues 133–158 (KIHDKRETEAKRDWNRQKQRLLKDNA) form a disordered region. Residues 136–158 (DKRETEAKRDWNRQKQRLLKDNA) are compositionally biased toward basic and acidic residues.

The protein belongs to the SmpB family.

Its subcellular location is the cytoplasm. Required for rescue of stalled ribosomes mediated by trans-translation. Binds to transfer-messenger RNA (tmRNA), required for stable association of tmRNA with ribosomes. tmRNA and SmpB together mimic tRNA shape, replacing the anticodon stem-loop with SmpB. tmRNA is encoded by the ssrA gene; the 2 termini fold to resemble tRNA(Ala) and it encodes a 'tag peptide', a short internal open reading frame. During trans-translation Ala-aminoacylated tmRNA acts like a tRNA, entering the A-site of stalled ribosomes, displacing the stalled mRNA. The ribosome then switches to translate the ORF on the tmRNA; the nascent peptide is terminated with the 'tag peptide' encoded by the tmRNA and targeted for degradation. The ribosome is freed to recommence translation, which seems to be the essential function of trans-translation. The chain is SsrA-binding protein from Ruegeria pomeroyi (strain ATCC 700808 / DSM 15171 / DSS-3) (Silicibacter pomeroyi).